The primary structure comprises 496 residues: Angiopoietin-2 (496 aa).

Positions 1-18 (MWQLVFLTLSCDLAVATA) are cleaved as a signal peptide. N-linked (GlcNAc...) asparagine glycans are attached at residues Asn-90, Asn-120, Asn-134, Asn-152, Asn-241, and Asn-304. The stretch at 167 to 249 (STNKLEKQIL…VNNSVLQKQQ (83 aa)) forms a coiled coil. Residues 275 to 495 (KDEQIIFRDC…ATTMMIRPAD (221 aa)) enclose the Fibrinogen C-terminal domain. Residues Cys-284 and Cys-313 are joined by a disulfide bond. Ca(2+) is bound by residues Asp-429, Asp-431, Cys-433, and Cys-435. Intrachain disulfides connect Cys-433-Cys-435 and Cys-437-Cys-450.

In terms of assembly, interacts with TEK/TIE2, competing for the same binding site as ANGPT1. Interacts with ITGA5. Interacts with SVEP1/polydom. Interacts with THBD; this interaction significantly inhibits the generation of activated PC and TAFIa/CPB2 by the thrombin/thrombomodulin complex.

The protein localises to the secreted. Binds to TEK/TIE2, competing for the ANGPT1 binding site, and modulating ANGPT1 signaling. Can induce tyrosine phosphorylation of TEK/TIE2 in the absence of ANGPT1. In the absence of angiogenic inducers, such as VEGF, ANGPT2-mediated loosening of cell-matrix contacts may induce endothelial cell apoptosis with consequent vascular regression. In concert with VEGF, it may facilitate endothelial cell migration and proliferation, thus serving as a permissive angiogenic signal. Involved in the regulation of lymphangiogenesis. This is Angiopoietin-2 (ANGPT2) from Bos taurus (Bovine).